Consider the following 317-residue polypeptide: Putative HTH-type transcriptional regulatory protein Mboo_0195 (317 aa).

In terms of domain architecture, HTH cro/C1-type spans 132–185; the sequence is LRELRERRSMSLGDLGQVLGVSRRTISKYESGMGTTLEVAIRIEEYFNTGVVES. Positions 143–162 form a DNA-binding region, H-T-H motif; sequence LGDLGQVLGVSRRTISKYES.

In Methanoregula boonei (strain DSM 21154 / JCM 14090 / 6A8), this protein is Putative HTH-type transcriptional regulatory protein Mboo_0195.